A 218-amino-acid polypeptide reads, in one-letter code: MQNQLVVKRLGRRDYLPVWQAMHEFTDTRNEETPDEVWLVEHNPVFTQGQAGKAEHLLNTGDIPVVQSDRGGQVTYHGPGQLVAYFLINLRRKKLGVRDLVTTIENLVINTLKAYNIDSAARPDAPGVYVEGRKICSLGLRIRKGCSFHGLALNVNMDLSPFLRINPCGYQGMEMVQVSELGGPTDIALVEQQLVKELVNLLGYEQVEFSTEAEVREA.

Residues 31–206 (EETPDEVWLV…ELVNLLGYEQ (176 aa)) form the BPL/LPL catalytic domain. Substrate-binding positions include 70–77 (RGGQVTYH), 137–139 (SLG), and 150–152 (GLA). Catalysis depends on C168, which acts as the Acyl-thioester intermediate.

Belongs to the LipB family.

Its subcellular location is the cytoplasm. The catalysed reaction is octanoyl-[ACP] + L-lysyl-[protein] = N(6)-octanoyl-L-lysyl-[protein] + holo-[ACP] + H(+). It participates in protein modification; protein lipoylation via endogenous pathway; protein N(6)-(lipoyl)lysine from octanoyl-[acyl-carrier-protein]: step 1/2. Functionally, catalyzes the transfer of endogenously produced octanoic acid from octanoyl-acyl-carrier-protein onto the lipoyl domains of lipoate-dependent enzymes. Lipoyl-ACP can also act as a substrate although octanoyl-ACP is likely to be the physiological substrate. The protein is Octanoyltransferase of Vibrio vulnificus (strain YJ016).